The following is a 126-amino-acid chain: Small ribosomal subunit protein uS13 (126 aa).

The interval 95-126 (GLPVRGQQTRTNARTRKGKRKTVGGTKKAKAK) is disordered. Residues 107 to 126 (ARTRKGKRKTVGGTKKAKAK) are compositionally biased toward basic residues.

This sequence belongs to the universal ribosomal protein uS13 family. Part of the 30S ribosomal subunit. Forms a loose heterodimer with protein S19. Forms two bridges to the 50S subunit in the 70S ribosome.

Functionally, located at the top of the head of the 30S subunit, it contacts several helices of the 16S rRNA. In the 70S ribosome it contacts the 23S rRNA (bridge B1a) and protein L5 of the 50S subunit (bridge B1b), connecting the 2 subunits; these bridges are implicated in subunit movement. Contacts the tRNAs in the A and P-sites. In Aquifex aeolicus (strain VF5), this protein is Small ribosomal subunit protein uS13.